A 206-amino-acid chain; its full sequence is Protein GrpE (206 aa).

Residues Met-1–Gly-36 are disordered.

Belongs to the GrpE family. In terms of assembly, homodimer.

It is found in the cytoplasm. Its function is as follows. Participates actively in the response to hyperosmotic and heat shock by preventing the aggregation of stress-denatured proteins, in association with DnaK and GrpE. It is the nucleotide exchange factor for DnaK and may function as a thermosensor. Unfolded proteins bind initially to DnaJ; upon interaction with the DnaJ-bound protein, DnaK hydrolyzes its bound ATP, resulting in the formation of a stable complex. GrpE releases ADP from DnaK; ATP binding to DnaK triggers the release of the substrate protein, thus completing the reaction cycle. Several rounds of ATP-dependent interactions between DnaJ, DnaK and GrpE are required for fully efficient folding. This is Protein GrpE from Rhodopseudomonas palustris (strain HaA2).